The sequence spans 194 residues: Protein cholesin (194 aa).

The disordered stretch occupies residues 1–83 (MAKQKRKVPE…RKKEERQRLR (83 aa)). 2 positions are modified to phosphoserine: Ser-23 and Ser-59. Over residues 61 to 83 (EEQRVLERKLKKERKKEERQRLR) the composition is skewed to basic and acidic residues. Phosphoserine occurs at positions 97 and 175.

Secreted from the instestine, secretion is induced by feeding and cholesterol absorption.

It is found in the secreted. Hormone secreted from the intestine in response to cholesterol, where it acts to inhibit cholesterol synthesis in the liver and VLDL secretion,leading to a reduction in circulating cholesterol levels. Acts through binding to its receptor, GPR146. The sequence is that of Protein cholesin from Homo sapiens (Human).